We begin with the raw amino-acid sequence, 359 residues long: Aminomethyltransferase (359 aa).

This sequence belongs to the GcvT family. As to quaternary structure, the glycine cleavage system is composed of four proteins: P, T, L and H.

It carries out the reaction N(6)-[(R)-S(8)-aminomethyldihydrolipoyl]-L-lysyl-[protein] + (6S)-5,6,7,8-tetrahydrofolate = N(6)-[(R)-dihydrolipoyl]-L-lysyl-[protein] + (6R)-5,10-methylene-5,6,7,8-tetrahydrofolate + NH4(+). Its function is as follows. The glycine cleavage system catalyzes the degradation of glycine. The chain is Aminomethyltransferase from Synechococcus sp. (strain RCC307).